The sequence spans 320 residues: Rhomboid-like protein 17, chloroplastic (320 aa).

Residues 1 to 87 (MHAIFSSFSR…LKFGNVMESR (87 aa)) constitute a chloroplast transit peptide. 5 helical membrane passes run 116–136 (WINGANGVVFGLVIANAAVFT), 160–180 (LITSGFSHIGTSQIILNMIGI), 199–219 (LYFAGALGGSVCFLSYHALLA), 247–267 (MFAIALLDMFIYPKVTTYFAL), and 295–315 (IASSSGQLGGVVVAAMAWARI).

Belongs to the peptidase S54 family.

The protein localises to the plastid. The protein resides in the chloroplast membrane. In terms of biological role, probable rhomboid-type serine protease that catalyzes intramembrane proteolysis. The sequence is that of Rhomboid-like protein 17, chloroplastic from Arabidopsis thaliana (Mouse-ear cress).